We begin with the raw amino-acid sequence, 228 residues long: Demethylmenaquinone methyltransferase (228 aa).

Residues T62, D80, 100 to 101 (DA), and S117 each bind S-adenosyl-L-methionine.

It belongs to the class I-like SAM-binding methyltransferase superfamily. MenG/UbiE family.

The enzyme catalyses a 2-demethylmenaquinol + S-adenosyl-L-methionine = a menaquinol + S-adenosyl-L-homocysteine + H(+). It participates in quinol/quinone metabolism; menaquinone biosynthesis; menaquinol from 1,4-dihydroxy-2-naphthoate: step 2/2. Methyltransferase required for the conversion of demethylmenaquinol (DMKH2) to menaquinol (MKH2). In Mycolicibacterium gilvum (strain PYR-GCK) (Mycobacterium gilvum (strain PYR-GCK)), this protein is Demethylmenaquinone methyltransferase.